The chain runs to 186 residues: Peptidyl-tRNA hydrolase (186 aa).

Tyr14 is a tRNA binding site. The Proton acceptor role is filled by His19. Positions 61, 63, and 107 each coordinate tRNA.

Belongs to the PTH family. In terms of assembly, monomer.

It is found in the cytoplasm. It carries out the reaction an N-acyl-L-alpha-aminoacyl-tRNA + H2O = an N-acyl-L-amino acid + a tRNA + H(+). Its function is as follows. Hydrolyzes ribosome-free peptidyl-tRNAs (with 1 or more amino acids incorporated), which drop off the ribosome during protein synthesis, or as a result of ribosome stalling. In terms of biological role, catalyzes the release of premature peptidyl moieties from peptidyl-tRNA molecules trapped in stalled 50S ribosomal subunits, and thus maintains levels of free tRNAs and 50S ribosomes. This is Peptidyl-tRNA hydrolase from Helicobacter pylori (strain HPAG1).